The primary structure comprises 420 residues: WD repeat-containing protein jip5 (420 aa).

6 WD repeats span residues 9 to 48, 72 to 111, 117 to 158, 221 to 262, 271 to 314, and 318 to 355; these read PLSA…VDSD, RHKG…VENK, DKNG…SKVS, VSSV…DQDE, GGGE…VVSE, and DETE…GDGV. The disordered stretch occupies residues 39 to 63; the sequence is RLPSDEVDSDDDGASTSSSRTGRGH. A disordered region spans residues 350 to 420; that stretch reads DSGDGVNGNE…QAVMAFHDLD (71 aa). Positions 368–387 are enriched in acidic residues; the sequence is DDSDEDSDDGDDDDDSGDSD. The segment covering 394-406 has biased composition (basic residues); it reads DARKKRKKGKTPK.

Belongs to the WD repeat WDR55 family.

It is found in the nucleus. Its subcellular location is the nucleolus. The polypeptide is WD repeat-containing protein jip5 (jip5) (Aspergillus terreus (strain NIH 2624 / FGSC A1156)).